A 229-amino-acid chain; its full sequence is PKHD-type hydroxylase OCAR_6723/OCA5_c13470 (229 aa).

Residues 78–180 (HIFPPLFNRY…RVASFFWLQS (103 aa)) enclose the Fe2OG dioxygenase domain. His98, Asp100, and His161 together coordinate Fe cation. Position 171 (Arg171) interacts with 2-oxoglutarate.

Requires Fe(2+) as cofactor. It depends on L-ascorbate as a cofactor.

The chain is PKHD-type hydroxylase OCAR_6723/OCA5_c13470 from Afipia carboxidovorans (strain ATCC 49405 / DSM 1227 / KCTC 32145 / OM5) (Oligotropha carboxidovorans).